The following is a 152-amino-acid chain: MSLPYAADAETSLSPSELQVLKSQYETELASGHVTTQTKFNYAWGLVKSKQRAEMSIGVGLLTEIYRSDPPRRRECLYYLSLGHYKMGNYDEARRFNALLIEREPNNLQAQSLNQLIEKGVAREGYIGMALIGGAAAVASIAIAGLMRRGRR.

Over 1-126 the chain is Cytoplasmic; it reads MSLPYAADAE…IEKGVAREGY (126 aa). The stretch at 74-107 is one TPR repeat; the sequence is RECLYYLSLGHYKMGNYDEARRFNALLIEREPNN. A helical transmembrane segment spans residues 127–147; that stretch reads IGMALIGGAAAVASIAIAGLM. Over 148–152 the chain is Mitochondrial intermembrane; it reads RRGRR.

It belongs to the FIS1 family.

It is found in the mitochondrion outer membrane. Functionally, has a role in mitochondrial fission. Has a role in outer membrane fission but not matrix separation. In Mycosarcoma maydis (Corn smut fungus), this protein is Mitochondrial fission 1 protein (FIS1).